The primary structure comprises 209 residues: Mediator of RNA polymerase II transcription subunit 20 (209 aa).

Belongs to the Mediator complex subunit 20 family. Component of the Mediator complex.

The protein localises to the nucleus. Its function is as follows. Component of the Mediator complex, a coactivator involved in the regulated transcription of nearly all RNA polymerase II-dependent genes. Mediator functions as a bridge to convey information from gene-specific regulatory proteins to the basal RNA polymerase II transcription machinery. Mediator is recruited to promoters by direct interactions with regulatory proteins and serves as a scaffold for the assembly of a functional preinitiation complex with RNA polymerase II and the general transcription factors. The polypeptide is Mediator of RNA polymerase II transcription subunit 20 (SRB2) (Eremothecium gossypii (strain ATCC 10895 / CBS 109.51 / FGSC 9923 / NRRL Y-1056) (Yeast)).